The sequence spans 390 residues: MKETRGYGGDAPFCTRLNHSYTGMWAPERSAEARGNLTRPPGSGEDCGSVSVAFPITMLLTGFVGNALAMLLVSRSYRRRESKRKKSFLLCIGWLALTDLVGQLLTTPVVIVVYLSKQRWEHIDPSGRLCTFFGLTMTVFGLSSLFIASAMAVERALAIRAPHWYASHMKTRATRAVLLGVWLAVLAFALLPVLGVGQYTVQWPGTWCFISTGRGGNGTSSSHNWGNLFFASAFAFLGLLALTVTFSCNLATIKALVSRCRAKATASQSSAQWGRITTETAIQLMGIMCVLSVCWSPLLIMMLKMIFNQTSVEHCKTHTEKQKECNFFLIAVRLASLNQILDPWVYLLLRKILLRKFCQIRYHTNNYASSSTSLPCQCSSTLMWSDHLER.

Residues 1 to 53 are Extracellular-facing; it reads MKETRGYGGDAPFCTRLNHSYTGMWAPERSAEARGNLTRPPGSGEDCGSVSVA. N-linked (GlcNAc...) asparagine glycans are attached at residues Asn18 and Asn36. Residues 54–78 form a helical membrane-spanning segment; sequence FPITMLLTGFVGNALAMLLVSRSYR. The Cytoplasmic portion of the chain corresponds to 79–91; it reads RRESKRKKSFLLC. The chain crosses the membrane as a helical span at residues 92–112; that stretch reads IGWLALTDLVGQLLTTPVVIV. Topologically, residues 113–131 are extracellular; sequence VYLSKQRWEHIDPSGRLCT. The chain crosses the membrane as a helical span at residues 132–153; that stretch reads FFGLTMTVFGLSSLFIASAMAV. The Cytoplasmic segment spans residues 154-175; that stretch reads ERALAIRAPHWYASHMKTRATR. The helical transmembrane segment at 176-197 threads the bilayer; the sequence is AVLLGVWLAVLAFALLPVLGVG. The Extracellular portion of the chain corresponds to 198–227; the sequence is QYTVQWPGTWCFISTGRGGNGTSSSHNWGN. A helical transmembrane segment spans residues 228 to 253; that stretch reads LFFASAFAFLGLLALTVTFSCNLATI. The Cytoplasmic segment spans residues 254-283; that stretch reads KALVSRCRAKATASQSSAQWGRITTETAIQ. A helical membrane pass occupies residues 284–307; sequence LMGIMCVLSVCWSPLLIMMLKMIF. Topologically, residues 308–327 are extracellular; that stretch reads NQTSVEHCKTHTEKQKECNF. A helical transmembrane segment spans residues 328 to 349; it reads FLIAVRLASLNQILDPWVYLLL. The Cytoplasmic portion of the chain corresponds to 350–390; it reads RKILLRKFCQIRYHTNNYASSSTSLPCQCSSTLMWSDHLER.

It belongs to the G-protein coupled receptor 1 family. Interacts (via C-terminus) with MKLN1. As to expression, detected in kidney. Expressed in small intestine, heart, pancreas, gastric fundic mucosa, mammary artery and pulmonary vessels.

Its subcellular location is the cell membrane. In terms of biological role, receptor for prostaglandin E2 (PGE2). The activity of this receptor can couple to both the inhibition of adenylate cyclase mediated by G(i) proteins, and to an elevation of intracellular calcium. Required for normal development of fever in response to pyrinogens, including IL1B, prostaglandin E2 and bacterial lipopolysaccharide (LPS). Required for normal potentiation of platelet aggregation by prostaglandin E2, and thus plays a role in the regulation of blood coagulation. Required for increased HCO3(-) secretion in the duodenum in response to mucosal acidification, and thereby contributes to the protection of the mucosa against acid-induced ulceration. Not required for normal kidney function, normal urine volume and osmolality. The sequence is that of Prostaglandin E2 receptor EP3 subtype (PTGER3) from Homo sapiens (Human).